Here is a 206-residue protein sequence, read N- to C-terminus: Small ribosomal subunit protein uS4A (206 aa).

The S4 RNA-binding domain maps to 98–164; the sequence is MRLDNVVYKL…EKFKTFAENP (67 aa).

The protein belongs to the universal ribosomal protein uS4 family. As to quaternary structure, part of the 30S ribosomal subunit. Contacts protein S5. The interaction surface between S4 and S5 is involved in control of translational fidelity.

Its function is as follows. One of the primary rRNA binding proteins, it binds directly to 16S rRNA where it nucleates assembly of the body of the 30S subunit. In terms of biological role, with S5 and S12 plays an important role in translational accuracy. This Clostridium novyi (strain NT) protein is Small ribosomal subunit protein uS4A.